A 190-amino-acid polypeptide reads, in one-letter code: Holliday junction branch migration complex subunit RuvA (190 aa).

The interval 1 to 64 is domain I; sequence MIGRITGTLI…EDAQLLYGFG (64 aa). The tract at residues 65–137 is domain II; sequence SSAERSTFRE…MRGKLGADIG (73 aa). The segment at 137–141 is flexible linker; sequence GATPH. The interval 142–190 is domain III; the sequence is AAGGHQSDILNALLALGYSDKESQAALKKLPEGVDVSEGIRLALKALVR.

It belongs to the RuvA family. As to quaternary structure, homotetramer. Forms an RuvA(8)-RuvB(12)-Holliday junction (HJ) complex. HJ DNA is sandwiched between 2 RuvA tetramers; dsDNA enters through RuvA and exits via RuvB. An RuvB hexamer assembles on each DNA strand where it exits the tetramer. Each RuvB hexamer is contacted by two RuvA subunits (via domain III) on 2 adjacent RuvB subunits; this complex drives branch migration. In the full resolvosome a probable DNA-RuvA(4)-RuvB(12)-RuvC(2) complex forms which resolves the HJ.

The protein localises to the cytoplasm. Functionally, the RuvA-RuvB-RuvC complex processes Holliday junction (HJ) DNA during genetic recombination and DNA repair, while the RuvA-RuvB complex plays an important role in the rescue of blocked DNA replication forks via replication fork reversal (RFR). RuvA specifically binds to HJ cruciform DNA, conferring on it an open structure. The RuvB hexamer acts as an ATP-dependent pump, pulling dsDNA into and through the RuvAB complex. HJ branch migration allows RuvC to scan DNA until it finds its consensus sequence, where it cleaves and resolves the cruciform DNA. The sequence is that of Holliday junction branch migration complex subunit RuvA from Bordetella parapertussis (strain 12822 / ATCC BAA-587 / NCTC 13253).